The chain runs to 578 residues: Tetratricopeptide repeat protein 39A (578 aa).

TPR repeat units lie at residues 280 to 313, 470 to 503, and 511 to 544; these read AIFL…QQHW, CLVK…EKKI, and PNAL…YKNY.

Belongs to the TTC39 family.

This is Tetratricopeptide repeat protein 39A (Ttc39a) from Mus musculus (Mouse).